The chain runs to 435 residues: Glycine reductase complex component B subunit gamma (435 aa).

The active site involves selenocysteine 350. Selenocysteine 350 is a non-standard amino acid (selenocysteine).

It belongs to the GrdB/GrdF/GrdH family. As to quaternary structure, heterohexamer of two alpha, two beta and two gamma subunits. Component of the glycine reductase complex, together with components A and C. PB is substrate specific.

It carries out the reaction acetyl phosphate + [thioredoxin]-disulfide + NH4(+) + H2O = [thioredoxin]-dithiol + glycine + phosphate + H(+). In terms of biological role, in the first step of glycine reductase, the substrate is bound to component PB via a Schiff base intermediate. Then the PB-activated substrate is nucleophilically attacked by the selenol anion of component PA to transform it to a carboxymethylated selenoether and the respective amine. By action of component PC, acetyl phosphate is formed, leaving component PA in its oxidized state. Finally component PA becomes reduced by the thioredoxin system to start a new catalytic cycle of reductive deamination. This chain is Glycine reductase complex component B subunit gamma (grdB), found in Carboxydothermus hydrogenoformans (strain ATCC BAA-161 / DSM 6008 / Z-2901).